Consider the following 1828-residue polypeptide: Chromodomain-helicase-DNA-binding protein 2 (1828 aa).

Residues 1-14 (MMRNKDKSQEEDSS) show a composition bias toward basic and acidic residues. The segment at 1–243 (MMRNKDKSQE…EDDDFETDSD (243 aa)) is disordered. A compositionally biased stretch (low complexity) spans 15 to 75 (LHSNASSHSA…SESESAGSKS (61 aa)). Basic and acidic residues-rich tracts occupy residues 81–101 (EAKEKPASKKERIADVKKMWE), 115–128 (SRQEPSRFNIKEEA), and 146–155 (KKQEKWKQEP). Basic residues predominate over residues 175–204 (VKARRPVPRRTVPKPRVKKQPKTQRGKRKK). A phosphoserine mark is found at Ser207 and Ser208. A compositionally biased stretch (acidic residues) spans 234–243 (EDDDFETDSD). A Phosphothreonine modification is found at Thr240. The residue at position 242 (Ser242) is a Phosphoserine. 2 consecutive Chromo domains span residues 261–353 (ETIE…QWLG) and 378–456 (QIVE…IPTR). The Helicase ATP-binding domain occupies 496-666 (AHSWCKNNSV…WSLLHFIMPE (171 aa)). Position 509–516 (509–516 (DEMGLGKT)) interacts with ATP. Positions 617–620 (DEAH) match the DEAH box motif. The region spanning 795-946 (LLDKLLTRLR…HLVIQRMDTT (152 aa)) is the Helicase C-terminal domain. Disordered stretches follow at residues 1030 to 1124 (EDEE…RSVR), 1331 to 1462 (VTGG…DEDD), 1556 to 1638 (HKKR…ADRG), and 1680 to 1828 (HMDA…VRKT). Residues 1037-1065 (ERPHKDWDEIIPEEQRKKVEEEERQKELE) are compositionally biased toward basic and acidic residues. Residues Ser1085, Ser1087, Ser1365, and Ser1386 each carry the phosphoserine modification. Basic and acidic residues predominate over residues 1347 to 1371 (KKENKVPRLKEEHGIELSSPRHSDN). 2 stretches are compositionally biased toward basic and acidic residues: residues 1396–1431 (ENKENKEKQMSSRKDKEGDKERKKSKDKKEKPKSGD) and 1565–1574 (EQKKKDDVTG). The tract at residues 1464 to 1566 (LDQETFSICK…KKRSQEEEEQ (103 aa)) is CHD1 helical C-terminal domain (CHCT). A compositionally biased stretch (polar residues) spans 1584–1601 (SGSSRDSLISQSHTSHNL). 4 stretches are compositionally biased toward basic and acidic residues: residues 1698 to 1720 (RPYDQYSSDRDHRGHRDYYDRHH), 1739 to 1749 (QDFRRMSDHRP), 1760 to 1772 (DHYRSFHTDKLGE), and 1795 to 1814 (SPHDSKSPLDHRSPLERSLE). At Ser1807 the chain carries Phosphoserine.

Belongs to the SNF2/RAD54 helicase family. As to quaternary structure, interacts with MYOD1. Interacts with histone H3.3.

The protein resides in the nucleus. It carries out the reaction ATP + H2O = ADP + phosphate + H(+). Its function is as follows. ATP-dependent chromatin-remodeling factor that specifically binds to the promoter of target genes, leading to chromatin remodeling, possibly by promoting deposition of histone H3.3. Involved in myogenesis via interaction with MYOD1: binds to myogenic gene regulatory sequences and mediates incorporation of histone H3.3 prior to the onset of myogenic gene expression, promoting their expression. This is Chromodomain-helicase-DNA-binding protein 2 (CHD2) from Homo sapiens (Human).